The chain runs to 222 residues: Urease accessory protein UreF (222 aa).

The protein belongs to the UreF family. In terms of assembly, ureD, UreF and UreG form a complex that acts as a GTP-hydrolysis-dependent molecular chaperone, activating the urease apoprotein by helping to assemble the nickel containing metallocenter of UreC. The UreE protein probably delivers the nickel.

It localises to the cytoplasm. Its function is as follows. Required for maturation of urease via the functional incorporation of the urease nickel metallocenter. This is Urease accessory protein UreF from Roseobacter denitrificans (strain ATCC 33942 / OCh 114) (Erythrobacter sp. (strain OCh 114)).